The sequence spans 401 residues: Tyrosine--tRNA ligase (401 aa).

The 'HIGH' region motif lies at 42–51; that stretch reads PTAPDLHLGH. The 'KMSKS' region signature appears at 226–230; the sequence is KMSKS. Lysine 229 is an ATP binding site. One can recognise an S4 RNA-binding domain in the interval 336–397; sequence IALAQLLKQI…GKRRIAKLSI (62 aa).

The protein belongs to the class-I aminoacyl-tRNA synthetase family. TyrS type 2 subfamily. As to quaternary structure, homodimer.

It is found in the cytoplasm. The enzyme catalyses tRNA(Tyr) + L-tyrosine + ATP = L-tyrosyl-tRNA(Tyr) + AMP + diphosphate + H(+). Catalyzes the attachment of tyrosine to tRNA(Tyr) in a two-step reaction: tyrosine is first activated by ATP to form Tyr-AMP and then transferred to the acceptor end of tRNA(Tyr). The sequence is that of Tyrosine--tRNA ligase from Legionella pneumophila (strain Paris).